The sequence spans 310 residues: Cytosolic Fe-S cluster assembly factor NUBP1 homolog (310 aa).

Positions 12, 26, 29, and 35 each coordinate [4Fe-4S] cluster. Residue G66 to S73 coordinates ATP. C240 and C243 together coordinate [4Fe-4S] cluster.

The protein belongs to the Mrp/NBP35 ATP-binding proteins family. NUBP1/NBP35 subfamily. Heterotetramer of 2 NUBP1 and 2 NUBP2 chains. Requires [4Fe-4S] cluster as cofactor.

It is found in the cytoplasm. In terms of biological role, component of the cytosolic iron-sulfur (Fe/S) protein assembly (CIA) machinery. Required for maturation of extramitochondrial Fe-S proteins. The NUBP1-NUBP2 heterotetramer forms a Fe-S scaffold complex, mediating the de novo assembly of an Fe-S cluster and its transfer to target apoproteins. The sequence is that of Cytosolic Fe-S cluster assembly factor NUBP1 homolog from Brugia malayi (Filarial nematode worm).